Consider the following 526-residue polypeptide: ATP synthase subunit alpha (526 aa).

171-178 (GDRQTGKT) lines the ATP pocket.

It belongs to the ATPase alpha/beta chains family. F-type ATPases have 2 components, CF(1) - the catalytic core - and CF(0) - the membrane proton channel. CF(1) has five subunits: alpha(3), beta(3), gamma(1), delta(1), epsilon(1). CF(0) has four main subunits: a(1), b(1), b'(1) and c(9-12).

The protein resides in the cell inner membrane. The catalysed reaction is ATP + H2O + 4 H(+)(in) = ADP + phosphate + 5 H(+)(out). Produces ATP from ADP in the presence of a proton gradient across the membrane. The alpha chain is a regulatory subunit. This is ATP synthase subunit alpha from Chlorobaculum tepidum (strain ATCC 49652 / DSM 12025 / NBRC 103806 / TLS) (Chlorobium tepidum).